We begin with the raw amino-acid sequence, 102 residues long: Small ribosomal subunit protein bS6 (102 aa).

The protein belongs to the bacterial ribosomal protein bS6 family.

Binds together with bS18 to 16S ribosomal RNA. The polypeptide is Small ribosomal subunit protein bS6 (Desulfovibrio desulfuricans (strain ATCC 27774 / DSM 6949 / MB)).